The chain runs to 370 residues: High affinity iron permease ftrA (370 aa).

The next 7 helical transmembrane spans lie at 5-25 (VFAV…SIIV), 52-72 (VWWG…GMIG), 88-108 (LWEG…GAAL), 148-168 (AMFL…VVFI), 179-199 (AFPL…YLLY), 206-226 (SLQI…AGLF), and 293-313 (YGSV…FVAM). Residues 335-370 (RKSAEPGNGEQDVEVSTIPSDLQTESKIPKSGASLV) are disordered. Positions 351–360 (TIPSDLQTES) are enriched in polar residues.

This sequence belongs to the oxidase-dependent Fe transporter (OFeT) (TC 9.A.10.1) family.

It localises to the cell membrane. Functionally, high affinity iron permease; part of the reductive iron assimilatory system (RIA), a siderophore-independent high affinity iron uptake mechanism. The chain is High affinity iron permease ftrA from Aspergillus fumigatus (strain ATCC MYA-4609 / CBS 101355 / FGSC A1100 / Af293) (Neosartorya fumigata).